A 1427-amino-acid chain; its full sequence is Multidrug resistance-associated protein 5 (1427 aa).

Topologically, residues 1 to 147 (MPSDSEEVCL…IYRFISTRLW (147 aa)) are cytoplasmic. A helical transmembrane segment spans residues 148–168 (FSCAVFFFCLIFGFIGPTCFI). In terms of domain architecture, ABC transmembrane type-1 1 spans 151–432 (AVFFFCLIFG…IPYGSRYLAE (282 aa)). The Extracellular portion of the chain corresponds to 169–185 (RRLIAFAENPERDEQSR). The helical transmembrane segment at 186–206 (IVYSYGIALVAAISVVEFARV) threads the bilayer. The Cytoplasmic segment spans residues 207–268 (LSYGATWAVS…RLFDAVTFAP (62 aa)). Residues 269–289 (LVLVGPLVLVGGIGYLLMVIG) traverse the membrane as a helical segment. Residue Arg290 is a topological domain, extracellular. A helical transmembrane segment spans residues 291–311 (WSLLGILVFFVFDVIQFGLGK). Residues 312-375 (SMVACRNLAI…RKSGYAQSLA (64 aa)) lie on the Cytoplasmic side of the membrane. A helical transmembrane segment spans residues 376-396 (IACGPVVPVVAAILTFVGVVL). At 397-399 (AGN) the chain is on the extracellular side. Residues 400–420 (DLLASDAFSAITVYFVMLFGI) form a helical membrane-spanning segment. The Cytoplasmic portion of the chain corresponds to 421-770 (RMIPYGSRYL…TIAWRIYKQY (350 aa)). One can recognise an ABC transporter 1 domain in the interval 486 to 707 (PTENEVIVVE…NDAYKTFVDA (222 aa)). 518–525 (GAVGCGKS) serves as a coordination point for ATP. A helical membrane pass occupies residues 771–791 (IHAAGGWPIWTCLVIGFIVNV). Positions 783–1078 (LVIGFIVNVV…AVRTQTELEA (296 aa)) constitute an ABC transmembrane type-1 2 domain. Residues 792 to 833 (VSNIFSTYWLSRWLKKGHDETTTITNGTEFLEMKTSLADSPV) are Extracellular-facing. N-linked (GlcNAc...) asparagine glycosylation is present at Asn817. A helical transmembrane segment spans residues 834–854 (TGFYAAVYLVALVVLTISGLF). Over 855 to 909 (KACVFVKVSLTAATRLHDRMFQAVIHGATSFFDSTPTGRILNRFSKDMDEIDVKL) the chain is Cytoplasmic. The helical transmembrane segment at 910 to 930 (PFTAEVFLQNMITCLGFLVVI) threads the bilayer. A topological domain (extracellular) is located at residue Thr931. A helical membrane pass occupies residues 932–952 (SVFPYFLLFAIPLFVVFVVFV). Residues 953–1022 (SCFRAGIRNL…MFQSAMRWLA (70 aa)) are Cytoplasmic-facing. A helical membrane pass occupies residues 1023–1043 (VWLDLLVVVMTAIVALLTVML). The Extracellular portion of the chain corresponds to 1044–1049 (TGTVSP). The chain crosses the membrane as a helical span at residues 1050-1070 (ADAGMAIAFAVQMSGIFQFAV). The Cytoplasmic segment spans residues 1071–1427 (RTQTELEAKM…SSDTDIEVVQ (357 aa)). The region spanning 1117–1351 (INFSEVNLRY…DWSVYKLEDK (235 aa)) is the ABC transporter 2 domain. Residue 1151-1158 (GRTGSGKS) participates in ATP binding. Positions 1361–1427 (VGENSEHSME…SSDTDIEVVQ (67 aa)) are disordered. Positions 1382 to 1418 (DIVKVENEQKDSSDDVVHIESGDDDVKADSSEVKETS) are enriched in basic and acidic residues.

Belongs to the ABC transporter superfamily. ABCC family. Conjugate transporter (TC 3.A.1.208) subfamily. Highly expressed in the intestine and pharynx. Expressed at low levels in the hypodermis and in some neurons.

The protein localises to the basolateral cell membrane. In terms of biological role, heme transporter required for the export of intestinal heme to different tissues and subcellular compartments. Also, required for the export of vitamin B12 from the intestine of the mother to the embryo to support embryonic development. The protein is Multidrug resistance-associated protein 5 of Caenorhabditis elegans.